The primary structure comprises 131 residues: MLKEFREFAVKGNVIDLAVGVIIGGAFGKIVTSLVNDLIMPLVGIIIGGHDFSGLSIKIGSAQILYGSFIQTVIDFLIISFSIFIFIRYLNKLKRKKVEEEEVVETPDQTEVLLTEIRDLLKHQSQSKDVQ.

2 helical membrane passes run 14–34 and 67–87; these read VIDL…VTSL and GSFI…FIFI.

This sequence belongs to the MscL family. Homopentamer.

The protein resides in the cell membrane. Its function is as follows. Channel that opens in response to stretch forces in the membrane lipid bilayer. May participate in the regulation of osmotic pressure changes within the cell. This Bacillus pumilus (strain SAFR-032) protein is Large-conductance mechanosensitive channel.